Here is a 308-residue protein sequence, read N- to C-terminus: MAKEEKNFMVDFLAGGLSAAVSKTAAAPIERVKLLIQNQDEMIKQGRLASPYKGIGECFVRTVREEGFGSLWRGNTANVIRYFPTQALNFAFKDKFKRMFGFNKDKEYWKWFAGNMASGGAAGAVSLSFVYSLDYARTRLANDAKSAKKGGGDRQFNGLVDVYRKTIASDGIAGLYRGFNISCVGIVVYRGLYFGMYDSLKPVVLVGPLANNFLAAFLLGWGITIGAGLASYPIDTIRRRMMMTSGSAVKYNSSFHCFQEIVKNEGMKSLFKGAGANILRAVAGAGVLAGYDQLQVILLGKKYGSGEA.

Solcar repeat units lie at residues 6 to 99 (KNFM…FKRM), 110 to 203 (KWFA…LKPV), and 211 to 297 (NNFL…LQVI). 5 helical membrane-spanning segments follow: residues 8–35 (FMVD…VKLL), 76–100 (TANV…KRMF), 108–128 (YWKW…VSLS), 179–200 (FNIS…YDSL), and 214–234 (LAAF…SYPI). Positions 81 and 93 each coordinate ADP. R238 contacts ADP. An important for transport activity region spans residues 238 to 243 (RRRMMM). The Nucleotide carrier signature motif motif lies at 238–243 (RRRMMM). A helical transmembrane segment spans residues 274 to 294 (AGANILRAVAGAGVLAGYDQL).

This sequence belongs to the mitochondrial carrier (TC 2.A.29) family. Monomer.

The protein localises to the mitochondrion inner membrane. The enzyme catalyses ADP(in) + ATP(out) = ADP(out) + ATP(in). With respect to regulation, the matrix-open state (m-state) is inhibited by the membrane-permeable bongkrekic acid (BKA). The cytoplasmic-open state (c-state) is inhibited by the membrane-impermeable toxic inhibitor carboxyatractyloside (CATR). Its function is as follows. ADP:ATP antiporter that mediates import of ADP into the mitochondrial matrix for ATP synthesis, and export of ATP out to fuel the cell. Cycles between the cytoplasmic-open state (c-state) and the matrix-open state (m-state): operates by the alternating access mechanism with a single substrate-binding site intermittently exposed to either the cytosolic (c-state) or matrix (m-state) side of the inner mitochondrial membrane. The polypeptide is ADP,ATP carrier protein (ABT) (Chlamydomonas reinhardtii (Chlamydomonas smithii)).